The sequence spans 339 residues: Dihydroorotase (339 aa).

The Zn(2+) site is built by H12 and H14. Residues 14-16 and N40 contribute to the substrate site; that span reads HVR. Residues K94, H133, H167, and D239 each coordinate Zn(2+). K94 is modified (N6-carboxylysine). Substrate is bound at residue H133. D239 is a catalytic residue. Substrate contacts are provided by H243 and A255.

The protein belongs to the metallo-dependent hydrolases superfamily. DHOase family. Class II DHOase subfamily. In terms of assembly, homodimer. Zn(2+) serves as cofactor.

The catalysed reaction is (S)-dihydroorotate + H2O = N-carbamoyl-L-aspartate + H(+). Its pathway is pyrimidine metabolism; UMP biosynthesis via de novo pathway; (S)-dihydroorotate from bicarbonate: step 3/3. Functionally, catalyzes the reversible cyclization of carbamoyl aspartate to dihydroorotate. The polypeptide is Dihydroorotase (Helicobacter pylori (strain P12)).